Here is a 960-residue protein sequence, read N- to C-terminus: UvrABC system protein A (960 aa).

ATP is bound at residue 35–42; it reads GLSGSGKS. A C4-type zinc finger spans residues 270 to 297; it reads CAHCNVSVPELQPRLFSFNAPFGACPSC. 2 ABC transporter domains span residues 327–605 and 625–953; these read FKPE…QASL and GNGN…WYIK. Position 657-664 (657-664) interacts with ATP; that stretch reads GVSGSGKS. Residues 756 to 782 form a C4-type zinc finger; the sequence is CEHCKGDGVITIEMNFLPDVYITCDVC.

Belongs to the ABC transporter superfamily. UvrA family. In terms of assembly, forms a heterotetramer with UvrB during the search for lesions.

It localises to the cytoplasm. Functionally, the UvrABC repair system catalyzes the recognition and processing of DNA lesions. UvrA is an ATPase and a DNA-binding protein. A damage recognition complex composed of 2 UvrA and 2 UvrB subunits scans DNA for abnormalities. When the presence of a lesion has been verified by UvrB, the UvrA molecules dissociate. The polypeptide is UvrABC system protein A (Treponema pallidum (strain Nichols)).